The sequence spans 101 residues: Small ribosomal subunit protein uS14 (101 aa).

The tract at residues S50–P70 is disordered. Basic residues predominate over residues R59 to G68.

The protein belongs to the universal ribosomal protein uS14 family. In terms of assembly, part of the 30S ribosomal subunit. Contacts proteins S3 and S10.

Binds 16S rRNA, required for the assembly of 30S particles and may also be responsible for determining the conformation of the 16S rRNA at the A site. The sequence is that of Small ribosomal subunit protein uS14 from Erwinia tasmaniensis (strain DSM 17950 / CFBP 7177 / CIP 109463 / NCPPB 4357 / Et1/99).